The chain runs to 387 residues: 1-deoxy-D-xylulose 5-phosphate reductoisomerase (387 aa).

Residues Thr10, Gly11, Ser12, Ile13, and Asn124 each coordinate NADPH. A 1-deoxy-D-xylulose 5-phosphate-binding site is contributed by Lys125. Glu126 provides a ligand contact to NADPH. Residue Asp150 participates in Mn(2+) binding. Residues Ser151, Glu152, Ser176, and His199 each contribute to the 1-deoxy-D-xylulose 5-phosphate site. Glu152 contributes to the Mn(2+) binding site. Gly205 contacts NADPH. Residues Ser212, Asn217, Lys218, and Glu221 each contribute to the 1-deoxy-D-xylulose 5-phosphate site. Glu221 provides a ligand contact to Mn(2+).

It belongs to the DXR family. Mg(2+) is required as a cofactor. Requires Mn(2+) as cofactor.

It carries out the reaction 2-C-methyl-D-erythritol 4-phosphate + NADP(+) = 1-deoxy-D-xylulose 5-phosphate + NADPH + H(+). It participates in isoprenoid biosynthesis; isopentenyl diphosphate biosynthesis via DXP pathway; isopentenyl diphosphate from 1-deoxy-D-xylulose 5-phosphate: step 1/6. Its function is as follows. Catalyzes the NADPH-dependent rearrangement and reduction of 1-deoxy-D-xylulose-5-phosphate (DXP) to 2-C-methyl-D-erythritol 4-phosphate (MEP). This is 1-deoxy-D-xylulose 5-phosphate reductoisomerase from Clostridium beijerinckii (strain ATCC 51743 / NCIMB 8052) (Clostridium acetobutylicum).